A 304-amino-acid polypeptide reads, in one-letter code: Ribonuclease Z (304 aa).

The Zn(2+) site is built by H61, H63, D65, H66, H138, D206, and H265. The active-site Proton acceptor is D65.

Belongs to the RNase Z family. In terms of assembly, homodimer. Requires Zn(2+) as cofactor.

It carries out the reaction Endonucleolytic cleavage of RNA, removing extra 3' nucleotides from tRNA precursor, generating 3' termini of tRNAs. A 3'-hydroxy group is left at the tRNA terminus and a 5'-phosphoryl group is left at the trailer molecule.. In terms of biological role, zinc phosphodiesterase, which displays some tRNA 3'-processing endonuclease activity. Probably involved in tRNA maturation, by removing a 3'-trailer from precursor tRNA. This is Ribonuclease Z from Lachnoclostridium phytofermentans (strain ATCC 700394 / DSM 18823 / ISDg) (Clostridium phytofermentans).